The primary structure comprises 523 residues: Maturase K (523 aa).

Belongs to the intron maturase 2 family. MatK subfamily.

It is found in the plastid. The protein resides in the chloroplast. Its function is as follows. Usually encoded in the trnK tRNA gene intron. Probably assists in splicing its own and other chloroplast group II introns. This is Maturase K from Asphodeline lutea (King's spear).